The primary structure comprises 185 residues: Elongation factor P (185 aa).

This sequence belongs to the elongation factor P family.

The protein resides in the cytoplasm. It functions in the pathway protein biosynthesis; polypeptide chain elongation. In terms of biological role, involved in peptide bond synthesis. Stimulates efficient translation and peptide-bond synthesis on native or reconstituted 70S ribosomes in vitro. Probably functions indirectly by altering the affinity of the ribosome for aminoacyl-tRNA, thus increasing their reactivity as acceptors for peptidyl transferase. The chain is Elongation factor P from Streptococcus equi subsp. equi (strain 4047).